We begin with the raw amino-acid sequence, 40 residues long: U12-ctenitoxin-Co1a (40 aa).

4 disulfide bridges follow: Cys2–Cys16, Cys9–Cys22, Cys15–Cys31, and Cys24–Cys29.

In terms of tissue distribution, expressed by the venom gland.

The protein resides in the secreted. Insecticidal neurotoxin that reversibly inhibits the N-methyl-D-aspartate (NMDA)-subtype of ionotropic glutamate receptor (GRIN) and inhibits inactivation of insect sodium channels (Nav). In vivo, is highly toxic to insects. This is U12-ctenitoxin-Co1a from Ctenus ornatus (Brazilian spider).